Here is a 44-residue protein sequence, read N- to C-terminus: MSDKPGMAEIEKFDKSKLKKTETQEKNPLSSKETIEQERQAGES.

The interval 1-44 is disordered; the sequence is MSDKPGMAEIEKFDKSKLKKTETQEKNPLSSKETIEQERQAGES. 2 stretches are compositionally biased toward basic and acidic residues: residues 9–25 and 33–44; these read EIEK…ETQE and ETIEQERQAGES.

It belongs to the thymosin beta family. As to expression, ubiquitous.

The protein localises to the cytoplasm. It is found in the cytoskeleton. Plays an important role in the organization of the cytoskeleton. Binds to and sequesters actin monomers (G actin) and therefore inhibits actin polymerization. In Homo sapiens (Human), this protein is Thymosin beta-4, Y-chromosomal (TMSB4Y).